A 41-amino-acid chain; its full sequence is Putative toxic protein TimP (41 aa).

The segment at 1 to 17 is a transmembrane helix; sequence MKIRCFCIVLIVSGALL.

The protein belongs to the TimP toxin family.

The protein localises to the cell inner membrane. Functionally, putative toxic component of a potential type I toxin-antitoxin (TA) system. Neutralized by sRNA antitoxin TimR which binds to the 5' UTR of timP mRNA and inhibits translation. The antitoxin gene is encoded immediately upstream and transcribed divergently from the toxin gene; antitoxin RNA is less stable than timP mRNA. The sequence is that of Putative toxic protein TimP from Escherichia coli (strain K12).